We begin with the raw amino-acid sequence, 336 residues long: Eukaryotic translation initiation factor 3 subunit H (336 aa).

The MPN domain occupies 21–154 (VQCDGLAAMK…LKAYRLTPQA (134 aa)).

It belongs to the eIF-3 subunit H family. Component of the eukaryotic translation initiation factor 3 (eIF-3) complex.

The protein resides in the cytoplasm. In terms of biological role, component of the eukaryotic translation initiation factor 3 (eIF-3) complex, which is involved in protein synthesis of a specialized repertoire of mRNAs and, together with other initiation factors, stimulates binding of mRNA and methionyl-tRNAi to the 40S ribosome. The eIF-3 complex specifically targets and initiates translation of a subset of mRNAs involved in cell proliferation. This Aedes aegypti (Yellowfever mosquito) protein is Eukaryotic translation initiation factor 3 subunit H.